The sequence spans 156 residues: ATP synthase subunit b (156 aa).

Residues 7-29 traverse the membrane as a helical segment; that stretch reads LLGQAISFGMFVWFCMKYVWPPI.

Belongs to the ATPase B chain family. F-type ATPases have 2 components, F(1) - the catalytic core - and F(0) - the membrane proton channel. F(1) has five subunits: alpha(3), beta(3), gamma(1), delta(1), epsilon(1). F(0) has three main subunits: a(1), b(2) and c(10-14). The alpha and beta chains form an alternating ring which encloses part of the gamma chain. F(1) is attached to F(0) by a central stalk formed by the gamma and epsilon chains, while a peripheral stalk is formed by the delta and b chains.

The protein localises to the cell inner membrane. Its function is as follows. F(1)F(0) ATP synthase produces ATP from ADP in the presence of a proton or sodium gradient. F-type ATPases consist of two structural domains, F(1) containing the extramembraneous catalytic core and F(0) containing the membrane proton channel, linked together by a central stalk and a peripheral stalk. During catalysis, ATP synthesis in the catalytic domain of F(1) is coupled via a rotary mechanism of the central stalk subunits to proton translocation. In terms of biological role, component of the F(0) channel, it forms part of the peripheral stalk, linking F(1) to F(0). The sequence is that of ATP synthase subunit b from Vibrio cholerae serotype O1 (strain ATCC 39541 / Classical Ogawa 395 / O395).